Consider the following 566-residue polypeptide: Macrophage colony-stimulating factor 1 (566 aa).

A signal peptide spans 1 to 32 (MTARGAAGRCPSSTWMGSRLLLVCLLVSRSVA). Topologically, residues 33–508 (EVSEHCSHMI…SSIQDPQTSA (476 aa)) are extracellular. N-linked (GlcNAc...) asparagine glycosylation is found at Asn-106, Asn-153, and Asn-171. Disordered stretches follow at residues 197-417 (PSSD…KLLP) and 434-484 (GKKS…GAAR). Polar residues predominate over residues 253-265 (PRSTCQTLESTEQ). Ser-302 is a glycosylation site (O-linked (Xyl...) (chondroitin sulfate) serine). The segment covering 348–360 (DQQPTNITDTPLT) has biased composition (polar residues). A glycan (N-linked (GlcNAc...) asparagine) is linked at Asn-353. 2 O-linked (GalNAc...) threonine glycosylation sites follow: Thr-355 and Thr-357. Positions 377-394 (EKTDGSSTLREDQQEPRS) are enriched in basic and acidic residues. Polar residues predominate over residues 400–410 (LNPQRVGNSAT). The segment covering 434–445 (GKKSTRDRRSPA) has biased composition (basic and acidic residues). A helical membrane pass occupies residues 509-531 (FVFWVLGIILVLLAVGGLLFYSW). Residues 532–566 (KRRSHRDPRTLDSSVGRPEGSSLAQDEDRQVELPV) lie on the Cytoplasmic side of the membrane. Residues 538-566 (DPRTLDSSVGRPEGSSLAQDEDRQVELPV) are disordered. The segment covering 557 to 566 (DEDRQVELPV) has biased composition (basic and acidic residues).

In terms of assembly, homodimer or heterodimer; disulfide-linked. Likely to exist in multiple forms: homodimer consisting of 2 identical 150-200 kDa proteoglycan subunits, heterodimer consisting of a 150-200 kDa proteoglycan subunit and a truncated 43 kDa subunit, and a homodimer consisting of 2 identical 43 kDa subunits. Interacts with CSF1R. N-glycosylated. Post-translationally, O-glycosylated; contains chondroitin sulfate.

It is found in the cell membrane. The protein localises to the secreted. Its subcellular location is the extracellular space. In terms of biological role, cytokine that plays an essential role in the regulation of survival, proliferation and differentiation of hematopoietic precursor cells, especially mononuclear phagocytes, such as macrophages and monocytes. Promotes the release of pro-inflammatory chemokines, and thereby plays an important role in innate immunity and in inflammatory processes. Plays an important role in the regulation of osteoclast proliferation and differentiation, the regulation of bone resorption, and is required for normal bone development. Required for normal male and female fertility. Promotes reorganization of the actin cytoskeleton, regulates formation of membrane ruffles, cell adhesion and cell migration. Plays a role in lipoprotein clearance. The sequence is that of Macrophage colony-stimulating factor 1 (Csf1) from Rattus norvegicus (Rat).